Reading from the N-terminus, the 537-residue chain is Beta-1-syntrophin (537 aa).

Position 2 is an N-acetylalanine (Ala-2). PH domains follow at residues 18–297 and 321–432; these read RAQR…SNAG and EIRH…QGCH. Phosphoserine occurs at positions 86, 125, and 204. One can recognise a PDZ domain in the interval 111 to 194; sequence GVKVLKQELG…EVLLEVKYMR (84 aa). The tract at residues 204–233 is disordered; the sequence is SPVSEIGWETPPPESPRLGGGSAEPLSSQS. A Phosphothreonine modification is found at Thr-213. Phosphoserine occurs at positions 218, 225, 231, 235, and 388. In terms of domain architecture, SU spans 481-537; that stretch reads PYEKLKMSSDDGIRMLYLDFGGKEGEIQLDLHSCPKPIVFIIHSFLSAKITRLGLVA. Residues 517-537 form a calmodulin-binding region; the sequence is PIVFIIHSFLSAKITRLGLVA.

Belongs to the syntrophin family. As to quaternary structure, monomer and homodimer. Interacts with the viral HTLV-1 TAX protein and other members of the syntrophin family: SNTA1 and SNTB2. Interacts with the dystrophin protein DMD and related proteins DTNA and UTRN and with the sodium channel proteins SCN4A and SCN5A. Interacts with DTNB. Phosphorylated by CaM-kinase II. Ubiquitous. Expressed at high levels in the liver.

Its subcellular location is the cell membrane. It localises to the sarcolemma. The protein localises to the cell junction. The protein resides in the cytoplasm. It is found in the cytoskeleton. In terms of biological role, adapter protein that binds to and probably organizes the subcellular localization of a variety of membrane proteins. May link various receptors to the actin cytoskeleton and the dystrophin glycoprotein complex. The sequence is that of Beta-1-syntrophin (Sntb1) from Mus musculus (Mouse).